The sequence spans 378 residues: Probable dihydroorotase-like protein (378 aa).

It belongs to the metallo-dependent hydrolases superfamily. DHOase family. PyrC' subfamily.

Functionally, non-functional DHOase. This Helicobacter pylori (strain ATCC 700392 / 26695) (Campylobacter pylori) protein is Probable dihydroorotase-like protein (pyrC').